The sequence spans 741 residues: NAD(P)H-quinone oxidoreductase subunit 5, chloroplastic (741 aa).

The next 16 helical transmembrane spans lie at 9 to 29, 39 to 59, 89 to 109, 125 to 145, 147 to 167, 185 to 205, 219 to 239, 258 to 278, 280 to 300, 327 to 347, 354 to 374, 396 to 416, 425 to 445, 542 to 562, 605 to 625, and 721 to 741; these read WVIPLLPLPVIMSMGFGLFFI, IWAFPSVLFLSIAMVFSIQLS, IDPLTSIMLILITTVGILVLI, FVYISFFTTSMLGLVTSSNLI, IYFFWELVGMCSYLLIGFWFT, GDFGLLLGILGFFWITGSLEF, NGINSLLTTLCAFLLFLGAVA, TPISALIHAATMVAAGIFLLA, LFPLFISLPLIMTLISLVGTI, LGYMMLALGIGSYQAALFHLI, ALLFLGSGSIIHSMEPLVGYS, TTFLWGTLSLCGIPPLACFWS, WLYSPFFGIIASFTAGLTAFY, LFPLLILLLFTLFIGFIGISF, AISSVSLAIFGLFIAYILYGS, and ISSYLFFFLCYVSVFLFFFIS.

This sequence belongs to the complex I subunit 5 family. As to quaternary structure, NDH is composed of at least 16 different subunits, 5 of which are encoded in the nucleus.

Its subcellular location is the plastid. The protein resides in the chloroplast thylakoid membrane. The enzyme catalyses a plastoquinone + NADH + (n+1) H(+)(in) = a plastoquinol + NAD(+) + n H(+)(out). The catalysed reaction is a plastoquinone + NADPH + (n+1) H(+)(in) = a plastoquinol + NADP(+) + n H(+)(out). Its function is as follows. NDH shuttles electrons from NAD(P)H:plastoquinone, via FMN and iron-sulfur (Fe-S) centers, to quinones in the photosynthetic chain and possibly in a chloroplast respiratory chain. The immediate electron acceptor for the enzyme in this species is believed to be plastoquinone. Couples the redox reaction to proton translocation, and thus conserves the redox energy in a proton gradient. The sequence is that of NAD(P)H-quinone oxidoreductase subunit 5, chloroplastic (ndhF) from Lolium perenne (Perennial ryegrass).